The sequence spans 607 residues: Polyphenol oxidase, chloroplastic (607 aa).

Residues 1-103 (MASLPWSLTT…LGATKPLAFG (103 aa)) constitute a chloroplast transit peptide. A disordered region spans residues 39 to 73 (RNRSRRFAPSKVSCNSANGDPNSDSTSDVRETSSG). The span at 50-64 (VSCNSANGDPNSDST) shows a compositional bias: polar residues. Intrachain disulfides connect C114–C129 and C128–C191. Residues H190, H211, H220, H342, H346, and H375 each coordinate Cu cation. A cross-link (2'-(S-cysteinyl)-histidine (Cys-His)) is located at residues 194–211 (CQGAYDQVGYTDLELQVH).

It belongs to the tyrosinase family. The cofactor is Cu(2+).

Its subcellular location is the plastid. It localises to the chloroplast thylakoid lumen. It carries out the reaction 2 catechol + O2 = 2 1,2-benzoquinone + 2 H2O. Its function is as follows. Catalyzes the oxidation of mono- and o-diphenols to o-diquinones. This Vitis vinifera (Grape) protein is Polyphenol oxidase, chloroplastic.